A 662-amino-acid chain; its full sequence is Polyunsaturated fatty acid lipoxygenase ALOX15 (662 aa).

The PLAT domain maps to 2–114 (GLYRIRVSTG…VLSLPEGTGR (113 aa)). The Lipoxygenase domain maps to 115–662 (TVGDDPQGLF…PSIVENSVAI (548 aa)). H360, H365, H540, H544, and I662 together coordinate Fe cation.

The protein belongs to the lipoxygenase family. Interacts with PEBP1; in response to IL13/interleukin-13, prevents the interaction of PEBP1 with RAF1 to activate the ERK signaling cascade. The cofactor is Fe cation.

It is found in the cytoplasm. Its subcellular location is the cytosol. It localises to the cell membrane. The protein localises to the lipid droplet. It catalyses the reaction (5Z,8Z,11Z,14Z)-eicosatetraenoate + O2 = (12S)-hydroperoxy-(5Z,8Z,10E,14Z)-eicosatetraenoate. The enzyme catalyses (9Z,12Z)-octadecadienoate + O2 = (13S)-hydroperoxy-(9Z,11E)-octadecadienoate. It carries out the reaction (5Z,8Z,11Z,14Z)-eicosatetraenoate + O2 = (15S)-hydroperoxy-(5Z,8Z,11Z,13E)-eicosatetraenoate. The catalysed reaction is (5Z,8Z,11Z,14Z)-eicosatetraenoate + 2 O2 = (14R,15S)-dihydroperoxy-(5Z,8Z,10E,12E)-eicosatetraenoate. It catalyses the reaction (5Z,8Z,11Z,14Z)-eicosatetraenoate + 2 O2 = (8S,15S)-dihydroperoxy-(5Z,9E,11Z,13E)-eicosatetraenoate. The enzyme catalyses (14S,15R)-epoxy-(5Z,8Z,11Z)-eicosatrienoate + O2 = (8S)-hydroperoxy-(14S,15R)-epoxy-(5Z,9E,11Z)-eicosatrienoate. It carries out the reaction (14S,15R)-epoxy-(5Z,8Z,11Z)-eicosatrienoate + O2 = (12S)-hydroperoxy-(14S,15R)-epoxy-(5Z,8Z,10E)-eicosatrienoate. The catalysed reaction is (14R,15S)-epoxy-(5Z,8Z,11Z)-eicosatrienoate + O2 = (5S)-hydroperoxy-(14R,15S)-epoxy-(6E,8Z,11Z)-eicosatrienoate. It catalyses the reaction (14R,15S)-epoxy-(5Z,8Z,11Z)-eicosatrienoate + O2 = (12S)-hydroperoxy-(14R,15S)-epoxy-(5Z,8Z,10E)-eicosatrienoate. The enzyme catalyses (15R)-hydroperoxy-(5Z,8Z,11Z,13E)-eicosatetraenoate = 15-oxo-(5Z,8Z,11Z,13E)-eicosatetraenoate + H2O. It carries out the reaction (15S)-hydroperoxy-(5Z,8Z,11Z,13E)-eicosatetraenoate = (14S,15S)-epoxy-(5Z,8Z,10E,12E)-eicosatetraenoate + H2O. The catalysed reaction is (12S)-hydroperoxy-(5Z,8Z,10E,14Z)-eicosatetraenoate = (8S)-hydroxy-(11S,12S)-epoxy-(5Z,9E,14Z)-eicosatrienoate. It catalyses the reaction (4Z,7Z,10Z,13Z,16Z)-docosapentaenoate + O2 = 14-hydroperoxy-(4Z,7Z,10Z,12E,16Z)-docosapentaenoate. The enzyme catalyses (7Z,10Z,13Z,16Z,19Z)-docosapentaenoate + O2 = 14-hydroperoxy-(7Z,10Z,12E,16Z,19Z)-docosapentaenoate. It carries out the reaction (4Z,7Z,10Z,13Z,16Z,19Z)-docosahexaenoate + O2 = (14S)-hydroperoxy-(4Z,7Z,10Z,12E,16Z,19Z)-docosahexaenoate. The catalysed reaction is (4Z,7Z,10Z,13Z,16Z,19Z)-docosahexaenoate + O2 = (17S)-hydroperoxy-(4Z,7Z,10Z,13Z,15E,19Z)-docosahexaenoate. It catalyses the reaction (7S)-hydroperoxy-(4Z,8E,10Z,13Z,16Z,19Z)-docosahexaenoate + O2 = (7S,14S)-dihydroperoxy-(4Z,8E,10Z,12E,16Z,19Z)-docosahexaenoate. The enzyme catalyses (7S)-hydroperoxy-(4Z,8E,10Z,13Z,16Z,19Z)-docosahexaenoate + O2 = (7S,17S)-dihydroperoxy-(4Z,8E,10Z,13Z,15E,19Z)-docosahexaenoate. It carries out the reaction (4Z,7Z,10Z,13Z,16Z,19Z)-docosahexaenoate + O2 = (11S)-hydroperoxy-(4Z,7Z,9E,13Z,16Z,19Z)-docosahexaenoate. The catalysed reaction is N-(5Z,8Z,11Z,14Z)-eicosatetraenoyl-taurine + O2 = N-(12S)-hydroperoxy-(5Z,8Z,10E,14Z)-eicosatetraenoyl-taurine. It catalyses the reaction N-(5Z,8Z,11Z,14Z)-eicosatetraenoyl-gamma-aminobutanoate + O2 = N-(12S)-hydroperoxy-(5Z,8Z,10E,14Z)-eicosatetraenoyl-gamma-aminobutanoate. The enzyme catalyses N-(5Z,8Z,11Z,14Z)-eicosatetraenoyl-glycine + O2 = N-(12S)-hydroperoxy-(5Z,8Z,10E,14Z)-eicosatetraenoyl-glycine. It carries out the reaction N-(5Z,8Z,11Z,14Z)-eicosatetraenoyl-L-alanine + O2 = N-(12S)-hydroperoxy-(5Z,8Z,10E,14Z)-eicosatetraenoyl-alanine. The catalysed reaction is N-(5Z,8Z,11Z,14Z)-eicosatetraenoyl-taurine + O2 = N-(15S)-hydroperoxy-(5Z,8Z,11Z,13E)-eicosatetraenoyl-taurine. It catalyses the reaction N-(5Z,8Z,11Z,14Z)-eicosatetraenoyl-gamma-aminobutanoate + O2 = N-(15S)-hydroperoxy-(5Z,8Z,11Z,13E)-eicosatetraenoyl-gamma-aminobutanoate. The enzyme catalyses N-(5Z,8Z,11Z,14Z)-eicosatetraenoyl-glycine + O2 = N-(15S)-hydroperoxy-(5Z,8Z,11Z,13E)-eicosatetraenoyl-glycine. It carries out the reaction N-(5Z,8Z,11Z,14Z)-eicosatetraenoyl-L-alanine + O2 = N-(15S)-hydroperoxy-(5Z,8Z,11Z,13E)-eicosatetraenoyl-alanine. Its pathway is lipid metabolism; hydroperoxy eicosatetraenoic acid biosynthesis. In terms of biological role, non-heme iron-containing dioxygenase that catalyzes the stereo-specific peroxidation of free and esterified polyunsaturated fatty acids generating a spectrum of bioactive lipid mediators. It inserts peroxyl groups at C12 or C15 of arachidonate ((5Z,8Z,11Z,14Z)-eicosatetraenoate) producing both 12-hydroperoxyeicosatetraenoate/12-HPETE and 15-hydroperoxyeicosatetraenoate/15-HPETE. It may then act on 12-HPETE to produce hepoxilins, which may show pro-inflammatory properties. Can also peroxidize linoleate ((9Z,12Z)-octadecadienoate) to 13-hydroperoxyoctadecadienoate. May participate in the sequential oxidations of DHA ((4Z,7Z,10Z,13Z,16Z,19Z)-docosahexaenoate) to generate specialized pro-resolving mediators (SPMs)like resolvin D5 ((7S,17S)-diHPDHA) and (7S,14S)-diHPDHA, that actively down-regulate the immune response and have anti-aggregation properties with platelets. Can convert epoxy fatty acids to hydroperoxy-epoxides derivatives followed by an intramolecular nucleophilic substitution leading to the formation of monocyclic endoperoxides. Plays an important role during the maintenance of self-tolerance by peroxidizing membrane-bound phosphatidylethanolamine which can then signal the sorting process for clearance of apoptotic cells during inflammation and prevent an autoimmune response. In addition to its role in the immune and inflammatory responses, this enzyme may play a role in epithelial wound healing in the cornea through production of lipoxin A4 (LXA(4)) and docosahexaenoic acid-derived neuroprotectin D1 (NPD1; 10R,17S-HDHA), both lipid autacoids exhibit anti-inflammatory and neuroprotective properties. Furthermore, it may regulate actin polymerization which is crucial for several biological processes such as the phagocytosis of apoptotic cells. It is also implicated in the generation of endogenous ligands for peroxisome proliferator activated receptor (PPAR-gamma), hence modulating macrophage development and function. It may also exert a negative effect on skeletal development by regulating bone mass through this pathway. As well as participates in ER stress and downstream inflammation in adipocytes, pancreatic islets, and liver. Finally, it is also involved in the cellular response to IL13/interleukin-13. In Pongo abelii (Sumatran orangutan), this protein is Polyunsaturated fatty acid lipoxygenase ALOX15.